A 762-amino-acid chain; its full sequence is Probable inorganic carbon transporter subunit DabA (762 aa).

Zn(2+) is bound by residues Cys279, Asp281, His461, and Cys476.

The protein belongs to the inorganic carbon transporter (TC 9.A.2) DabA family. In terms of assembly, forms a complex with DabB. The cofactor is Zn(2+).

It is found in the cell inner membrane. Functionally, part of an energy-coupled inorganic carbon pump. The polypeptide is Probable inorganic carbon transporter subunit DabA (Legionella pneumophila (strain Corby)).